A 338-amino-acid chain; its full sequence is Putative peptide import ATP-binding protein BMEII0863 (338 aa).

The ABC transporter domain occupies 10-263; sequence KGLRTVFRTR…PRHPYTMGLL (254 aa). 43–50 provides a ligand contact to ATP; the sequence is GESGSGKS.

Belongs to the ABC transporter superfamily. The complex is composed of two ATP-binding proteins (BMEII0863 and BMEII0864), two transmembrane proteins (BMEII0860 and BMEII0861) and a solute-binding protein (BMEII0859).

It localises to the cell inner membrane. Probably part of an ABC transporter complex that could be involved in peptide import. Probably responsible for energy coupling to the transport system. In Brucella melitensis biotype 1 (strain ATCC 23456 / CCUG 17765 / NCTC 10094 / 16M), this protein is Putative peptide import ATP-binding protein BMEII0863.